The primary structure comprises 167 residues: Novel acetylcholine receptor chaperone (167 aa).

Residues 1–5 (MASPR) are Cytoplasmic-facing. A helical transmembrane segment spans residues 6 to 26 (TITIMALSVALGLFFVFMGTI). The Lumenal segment spans residues 27 to 61 (KLTPRLSKDAYSEMKRAYKSYVRALPLLKKMGINS). Residues 43 to 54 (AYKSYVRALPLL) form an interaction with NGFR region. A helical membrane pass occupies residues 62–82 (ILLRKSIGALEVACGIVMTLV). Over 83 to 88 (PGRPKD) the chain is Cytoplasmic. Residues 89 to 109 (VANFFLLLLVLAVLFFHQLVG) form a helical membrane-spanning segment. Residues 110-114 (DPLKR) are Lumenal-facing. Residues 115-132 (YAHALVFGILLTCRLLIA) traverse the membrane as a helical segment. Over 133 to 167 (RKPEDRSSEKKALPESAEEQPSLYEKAPQGKVKVS) the chain is Cytoplasmic. A compositionally biased stretch (basic and acidic residues) spans 135–145 (PEDRSSEKKAL). The segment at 135 to 167 (PEDRSSEKKALPESAEEQPSLYEKAPQGKVKVS) is disordered.

The protein belongs to the DoxX family. May interact with NGFR. Interacts with RPN1, RPN2 and CANX. Brain (at protein level). Expressed in the spinal cord dorsal horn (at protein level).

The protein localises to the peroxisome membrane. It is found in the cytoplasmic vesicle. The protein resides in the endoplasmic reticulum membrane. Molecular chaperone which mediates the proper assembly and functional expression of the nicotinic acetylcholine receptors (nAChRs) throughout the brain. Essential for the proper folding, assembly, function and surface trafficking of alpha-7 (CHRNA7), alpha-4-beta-2, alpha-3-beta-2 and alpha-3-beta-4 receptors. Stably associates with ribophorin-1 (RPN1) and ribophorin-2 (RPN2) (components of the oligosaccharyl transferase (OST) complex) and with calnexin (CANX), both of which are critical for NACHO-mediated effects on CHRNA7 assembly and function. Facilitates the proper folding and assembly of alpha-6-beta-2 and alpha-6-beta-2-beta-3 receptors and acts at early stages of the nAChRs subunit assembly. Promotes the expression of the alpha-4(2):beta-2(3) stoichiometric form over the alpha-4(3):beta-2(2) form. This Mus musculus (Mouse) protein is Novel acetylcholine receptor chaperone.